Consider the following 379-residue polypeptide: Succinyl-diaminopimelate desuccinylase (379 aa).

H68 lines the Zn(2+) pocket. The active site involves D70. Position 101 (D101) interacts with Zn(2+). E135 (proton acceptor) is an active-site residue. Zn(2+) is bound by residues E136, E164, and H350.

It belongs to the peptidase M20A family. DapE subfamily. As to quaternary structure, homodimer. Requires Zn(2+) as cofactor. Co(2+) is required as a cofactor.

It catalyses the reaction N-succinyl-(2S,6S)-2,6-diaminopimelate + H2O = (2S,6S)-2,6-diaminopimelate + succinate. Its pathway is amino-acid biosynthesis; L-lysine biosynthesis via DAP pathway; LL-2,6-diaminopimelate from (S)-tetrahydrodipicolinate (succinylase route): step 3/3. Its function is as follows. Catalyzes the hydrolysis of N-succinyl-L,L-diaminopimelic acid (SDAP), forming succinate and LL-2,6-diaminopimelate (DAP), an intermediate involved in the bacterial biosynthesis of lysine and meso-diaminopimelic acid, an essential component of bacterial cell walls. The chain is Succinyl-diaminopimelate desuccinylase from Bordetella pertussis (strain Tohama I / ATCC BAA-589 / NCTC 13251).